Here is a 68-residue protein sequence, read N- to C-terminus: Small ribosomal subunit protein bS21 (68 aa).

The disordered stretch occupies residues 39–68; it reads PPSVKRVRKKQESERRHRKERAMRRRMMEE. Residues 54–68 are compositionally biased toward basic residues; that stretch reads RHRKERAMRRRMMEE.

It belongs to the bacterial ribosomal protein bS21 family.

This chain is Small ribosomal subunit protein bS21, found in Orientia tsutsugamushi (strain Boryong) (Rickettsia tsutsugamushi).